The sequence spans 410 residues: Arginine deiminase (410 aa).

Cysteine 400 serves as the catalytic Amidino-cysteine intermediate.

Belongs to the arginine deiminase family.

It is found in the cytoplasm. The catalysed reaction is L-arginine + H2O = L-citrulline + NH4(+). Its pathway is amino-acid degradation; L-arginine degradation via ADI pathway; carbamoyl phosphate from L-arginine: step 1/2. The chain is Arginine deiminase from Streptococcus uberis (strain ATCC BAA-854 / 0140J).